Consider the following 989-residue polypeptide: Cellulose synthase A catalytic subunit 4 [UDP-forming] (989 aa).

Over 1–184 the chain is Cytoplasmic; that stretch reads MMESGVPPCA…SRIIPISKNK (184 aa). The Zn(2+) site is built by C9, C12, C20, C23, C28, C31, C43, and C46. Residues 9 to 47 form an RING-type; degenerate zinc finger; it reads CAACGDDAHAACRACSYALCKACLDEDAAEGRTTCARCG. A compositionally biased stretch (basic residues) spans 138–149; that stretch reads KKEKKASAKKAA. The disordered stretch occupies residues 138-158; sequence KKEKKASAKKAAAKAQAPPVE. The helical transmembrane segment at 185-205 threads the bilayer; it reads LTPYRAVIIMRLVVLGLFFHY. Over 206–213 the chain is Extracellular; that stretch reads RITNPVYS. Residues 214–234 form a helical membrane-spanning segment; the sequence is AFGLWMTSVICEIWFGFSWIL. Residues 235–772 lie on the Cytoplasmic side of the membrane; sequence DQFPKWCPIN…INTIVYPFTS (538 aa). UDP-alpha-D-glucose contacts are provided by S272, K278, E279, and D308. D308 is a catalytic residue. A coiled-coil region spans residues 362–389; sequence VKERRAMKRDYEEYKVRINALVAKAQKT. K449 contacts UDP-alpha-D-glucose. Mn(2+) is bound by residues K450 and D474. Residue D688 is part of the active site. A helical transmembrane segment spans residues 773–793; it reads LPLIAYCCLPAICLLTGKFII. Residues 794-798 lie on the Extracellular side of the membrane; that stretch reads PTLSN. Residues 799–819 traverse the membrane as a helical segment; sequence AATIWFLGLFISIIVTSVLEL. Over 820-835 the chain is Cytoplasmic; the sequence is RWSGIGIEDWWRNEQF. Residues 836-856 traverse the membrane as a helical segment; sequence WVIGGVSAHLFAVFQGILKMI. At 857–884 the chain is on the extracellular side; it reads AGLDTNFTVTAKATDDTEFGELYVFKWT. An N-linked (GlcNAc...) asparagine glycan is attached at N862. The chain crosses the membrane as a helical span at residues 885–905; it reads TVLIPPTSILVLNLVGVVAGF. Residues 906 to 916 are Cytoplasmic-facing; that stretch reads SDALNSGYESW. The helical transmembrane segment at 917–937 threads the bilayer; it reads GPLFGKVFFAMWVIMHLYPFL. Over 938 to 946 the chain is Extracellular; sequence KGLMGRQNR. The helical transmembrane segment at 947 to 967 threads the bilayer; sequence TPTIVVLWSVLLASVFSLLWV. Residues 968–989 are Cytoplasmic-facing; the sequence is KIDPFIGSSETTTTNSCANFDC.

Belongs to the glycosyltransferase 2 family. Plant cellulose synthase subfamily. The cofactor is Mn(2+). Zn(2+) serves as cofactor.

It localises to the cell membrane. The enzyme catalyses [(1-&gt;4)-beta-D-glucosyl](n) + UDP-alpha-D-glucose = [(1-&gt;4)-beta-D-glucosyl](n+1) + UDP + H(+). It functions in the pathway glycan metabolism; plant cellulose biosynthesis. Catalytic subunit of cellulose synthase terminal complexes ('rosettes'), required for beta-1,4-glucan microfibril crystallization, a major mechanism of the cell wall formation. Involved in the secondary cell wall formation. This Oryza sativa subsp. japonica (Rice) protein is Cellulose synthase A catalytic subunit 4 [UDP-forming] (CESA4).